Consider the following 247-residue polypeptide: Cell division protein ZapD (247 aa).

Belongs to the ZapD family. In terms of assembly, interacts with FtsZ.

The protein localises to the cytoplasm. Cell division factor that enhances FtsZ-ring assembly. Directly interacts with FtsZ and promotes bundling of FtsZ protofilaments, with a reduction in FtsZ GTPase activity. In Escherichia coli O157:H7, this protein is Cell division protein ZapD.